A 454-amino-acid chain; its full sequence is tRNA modification GTPase MnmE (454 aa).

(6S)-5-formyl-5,6,7,8-tetrahydrofolate contacts are provided by Arg-23, Glu-80, and Lys-120. The TrmE-type G domain maps to 216–377 (GMKVVIAGRP…LRDHLKQSMG (162 aa)). Asn-226 contacts K(+). GTP contacts are provided by residues 226–231 (NAGKSS), 245–251 (TDIAGTT), 270–273 (DTAG), 335–338 (NKAD), and 358–360 (SAR). Residue Ser-230 participates in Mg(2+) binding. Positions 245, 247, and 250 each coordinate K(+). Residue Thr-251 coordinates Mg(2+). Lys-454 provides a ligand contact to (6S)-5-formyl-5,6,7,8-tetrahydrofolate.

Belongs to the TRAFAC class TrmE-Era-EngA-EngB-Septin-like GTPase superfamily. TrmE GTPase family. In terms of assembly, homodimer. Heterotetramer of two MnmE and two MnmG subunits. It depends on K(+) as a cofactor.

The protein resides in the cytoplasm. Functionally, exhibits a very high intrinsic GTPase hydrolysis rate. Involved in the addition of a carboxymethylaminomethyl (cmnm) group at the wobble position (U34) of certain tRNAs, forming tRNA-cmnm(5)s(2)U34. The protein is tRNA modification GTPase MnmE of Yersinia pseudotuberculosis serotype O:3 (strain YPIII).